A 591-amino-acid polypeptide reads, in one-letter code: Aspartate--tRNA ligase (591 aa).

Glutamate 171 lines the L-aspartate pocket. Positions 195 to 198 are aspartate; the sequence is QLFK. Arginine 217 contributes to the L-aspartate binding site. Residues 217-219 and glutamine 226 each bind ATP; that span reads RDE. Histidine 448 contributes to the L-aspartate binding site. Glutamate 482 contributes to the ATP binding site. Arginine 489 is an L-aspartate binding site. 534–537 serves as a coordination point for ATP; that stretch reads GLDR.

This sequence belongs to the class-II aminoacyl-tRNA synthetase family. Type 1 subfamily. In terms of assembly, homodimer.

The protein localises to the cytoplasm. It catalyses the reaction tRNA(Asp) + L-aspartate + ATP = L-aspartyl-tRNA(Asp) + AMP + diphosphate. Functionally, catalyzes the attachment of L-aspartate to tRNA(Asp) in a two-step reaction: L-aspartate is first activated by ATP to form Asp-AMP and then transferred to the acceptor end of tRNA(Asp). This is Aspartate--tRNA ligase from Edwardsiella ictaluri (strain 93-146).